Here is a 260-residue protein sequence, read N- to C-terminus: Cell division protein FtsQ (260 aa).

Topologically, residues 1–26 are cytoplasmic; sequence MINKVLLEGQRITRSPQVKQHACGAS. The helical transmembrane segment at 27-47 threads the bilayer; it reads FFLVVLLLIGGLLYSTISWMW. Residues 48–260 are Periplasmic-facing; the sequence is DEQRLPLSKL…QELTQEKNDD (213 aa). The 71-residue stretch at 52-122 folds into the POTRA domain; the sequence is LPLSKLVLQG…DTIKVYLTEY (71 aa).

The protein belongs to the FtsQ/DivIB family. FtsQ subfamily. Part of a complex composed of FtsB, FtsL and FtsQ.

Its subcellular location is the cell inner membrane. In terms of biological role, essential cell division protein. May link together the upstream cell division proteins, which are predominantly cytoplasmic, with the downstream cell division proteins, which are predominantly periplasmic. May control correct divisome assembly. This is Cell division protein FtsQ from Vibrio cholerae serotype O1 (strain ATCC 39315 / El Tor Inaba N16961).